Here is a 391-residue protein sequence, read N- to C-terminus: Phosphoglycerate kinase (391 aa).

Residues 21 to 23 (DLN), arginine 36, 59 to 62 (HLGR), arginine 113, and arginine 146 contribute to the substrate site. ATP is bound by residues lysine 197, glutamate 319, and 345 to 348 (GGDT).

This sequence belongs to the phosphoglycerate kinase family. As to quaternary structure, monomer.

Its subcellular location is the cytoplasm. It carries out the reaction (2R)-3-phosphoglycerate + ATP = (2R)-3-phospho-glyceroyl phosphate + ADP. Its pathway is carbohydrate degradation; glycolysis; pyruvate from D-glyceraldehyde 3-phosphate: step 2/5. The protein is Phosphoglycerate kinase of Stenotrophomonas maltophilia (strain R551-3).